We begin with the raw amino-acid sequence, 201 residues long: Imidazoleglycerol-phosphate dehydratase (201 aa).

It belongs to the imidazoleglycerol-phosphate dehydratase family.

The protein localises to the cytoplasm. It catalyses the reaction D-erythro-1-(imidazol-4-yl)glycerol 3-phosphate = 3-(imidazol-4-yl)-2-oxopropyl phosphate + H2O. It participates in amino-acid biosynthesis; L-histidine biosynthesis; L-histidine from 5-phospho-alpha-D-ribose 1-diphosphate: step 6/9. The chain is Imidazoleglycerol-phosphate dehydratase from Prochlorococcus marinus (strain MIT 9515).